A 121-amino-acid polypeptide reads, in one-letter code: Group 1 truncated hemoglobin (121 aa).

Methionine 1 carries the post-translational modification N-acetylmethionine. Histidine 73 provides a ligand contact to heme.

Belongs to the truncated hemoglobin family. Group I subfamily. In terms of assembly, monomer. Heme is required as a cofactor.

The chain is Group 1 truncated hemoglobin from Tetrahymena thermophila.